A 118-amino-acid chain; its full sequence is Mitochondrial protein YPR099C (118 aa).

The protein resides in the mitochondrion. Its function is as follows. Essential for the functional mitochondria and respiratory growth. This chain is Mitochondrial protein YPR099C, found in Saccharomyces cerevisiae (strain ATCC 204508 / S288c) (Baker's yeast).